We begin with the raw amino-acid sequence, 339 residues long: Serine racemase (339 aa).

Glu13 is a Mg(2+) binding site. Ser31, Ser32, Ile33, Lys51, and Thr52 together coordinate ATP. Lys56 serves as the catalytic Proton acceptor. Residue Lys56 is modified to N6-(pyridoxal phosphate)lysine. Pro69 is a Ca(2+) binding site. Thr71 is subject to Phosphothreonine. Ca(2+) is bound at residue Thr81. The active-site Proton acceptor is the Ser84. Asn86 provides a ligand contact to pyridoxal 5'-phosphate. Gln89 is a binding site for ATP. At Cys113 the chain carries S-nitrosocysteine. Residue Tyr121 participates in ATP binding. Asn154 lines the pyridoxal 5'-phosphate pocket. A Mg(2+)-binding site is contributed by Asp178. The pyridoxal 5'-phosphate site is built by Gly185, Gly186, Gly187, Gly188, and Met189. Mg(2+)-binding residues include Glu210, Ala214, Asp216, and Asn247. Ca(2+)-binding residues include Glu210, Ala214, Asp216, and Asn247. Positions 210, 214, and 216 each coordinate Mn(2+). Lys279 is a binding site for ATP. Ser313 is a pyridoxal 5'-phosphate binding site. ATP is bound at residue Asn316.

It belongs to the serine/threonine dehydratase family. As to quaternary structure, homodimer. The cofactor is Mg(2+). Mn(2+) serves as cofactor. Requires Ca(2+) as cofactor. Pyridoxal 5'-phosphate is required as a cofactor. In terms of processing, S-nitrosylated, leading to decrease the enzyme activity. Expressed in the hippocampus (at protein level). Expressed in the small intestine.

It carries out the reaction L-serine = D-serine. The enzyme catalyses D-serine = pyruvate + NH4(+). It catalyses the reaction L-serine = pyruvate + NH4(+). With respect to regulation, allosterically activated by magnesium, and possibly also other divalent metal cations. Allosterically activated by ATP, ADP or GTP. Catalyzes the synthesis of D-serine from L-serine. D-serine is a key coagonist with glutamate at NMDA receptors. Has dehydratase activity towards both L-serine and D-serine. This is Serine racemase (Srr) from Mus musculus (Mouse).